The primary structure comprises 247 residues: Geranylgeranylglyceryl phosphate synthase (247 aa).

Asp-23 and Ser-52 together coordinate Mg(2+). Sn-glycerol 1-phosphate is bound by residues 171-177, 203-204, and 225-226; these read YLEAGSG, GG, and GT.

The protein belongs to the GGGP/HepGP synthase family. Group II subfamily. It depends on Mg(2+) as a cofactor.

It localises to the cytoplasm. The catalysed reaction is sn-glycerol 1-phosphate + (2E,6E,10E)-geranylgeranyl diphosphate = sn-3-O-(geranylgeranyl)glycerol 1-phosphate + diphosphate. Its pathway is membrane lipid metabolism; glycerophospholipid metabolism. In terms of biological role, prenyltransferase that catalyzes the transfer of the geranylgeranyl moiety of geranylgeranyl diphosphate (GGPP) to the C3 hydroxyl of sn-glycerol-1-phosphate (G1P). This reaction is the first ether-bond-formation step in the biosynthesis of archaeal membrane lipids. This chain is Geranylgeranylglyceryl phosphate synthase, found in Methanosarcina barkeri (strain Fusaro / DSM 804).